Consider the following 317-residue polypeptide: Apolipoprotein E (317 aa).

An N-terminal signal peptide occupies residues 1 to 18 (MKVLWAALLVTFLAGCQA). Residues Thr-26 and Thr-36 are each glycosylated (O-linked (GalNAc...) threonine). Tandem repeats lie at residues 80–101 (ALMDETMKELKAYKSELEEQLT), 102–123 (PVAEETRARLSKELQAAQARLG), 124–145 (ADMEDVCGRLVQYRGEVQAMLG), 146–167 (QSTEELRVRLASHLRKLRKRLL), 168–189 (RDADDLQKRLAVYQAGAREGAE), 190–211 (RGLSAIRERLGPLVEQGRVRAA), 212–233 (TVGSLAGQPLQERAQAWGERLR), and 234–255 (ARMEEMGSRTRDRLDEVKEQVA). The 8 X 22 AA approximate tandem repeats stretch occupies residues 80 to 255 (ALMDETMKEL…RLDEVKEQVA (176 aa)). A glycan (N-linked (Glc) (glycation) lysine) is linked at Lys-93. Met-143 carries the post-translational modification Methionine sulfoxide. Residue Ser-147 is modified to Phosphoserine; by FAM20C. The interval 158–168 (HLRKLRKRLLR) is LDL and other lipoprotein receptors binding. 162-165 (LRKR) contacts heparin. The lipid-binding and lipoprotein association stretch occupies residues 210–290 (AATVGSLAGQ…SWFEPLVEDM (81 aa)). O-linked (GalNAc...) threonine glycosylation is present at Thr-212. Position 229–236 (229–236 (GERLRARM)) interacts with heparin. Residues 266–317 (QQIRLQAEAFQARLKSWFEPLVEDMQRQWAGLVEKVQAAVGTSAAPVPSDNH) form a homooligomerization region. The interval 278 to 290 (RLKSWFEPLVEDM) is specificity for association with VLDL. A glycan (O-linked (GalNAc...) threonine) is linked at Thr-307. Residues Ser-308 and Ser-314 are each glycosylated (O-linked (GalNAc...) serine).

Belongs to the apolipoprotein A1/A4/E family. In terms of assembly, homotetramer. May interact with ABCA1; functionally associated with ABCA1 in the biogenesis of HDLs. May interact with APP/A4 amyloid-beta peptide; the interaction is extremely stable in vitro but its physiological significance is unclear. May interact with MAPT. May interact with MAP2. In the cerebrospinal fluid, interacts with secreted SORL1. Interacts with PMEL; this allows the loading of PMEL luminal fragment on ILVs to induce fibril nucleation. (Microbial infection) Interacts with hepatitis C virus (HCV) envelope glycoprotein E2; this interaction is required for HCV infectivity and production. APOE exists as multiple glycosylated and sialylated glycoforms within cells and in plasma. The extent of glycosylation and sialylation are tissue and context specific. Plasma APOE undergoes desialylation and is less glycosylated and sialylated than the cellular form. Glycosylation is not required for proper expression and secretion. O-glycosylated with core 1 or possibly core 8 glycans. Thr-307 and Ser-314 are minor glycosylation sites compared to Ser-308. In terms of processing, glycated in plasma VLDL of normal subjects, and of hyperglycemic diabetic patients at a higher level (2-3 fold). Post-translationally, phosphorylated by FAM20C in the extracellular medium. Undergoes C-terminal proteolytic processing in neurons. C-terminally truncated APOE has a tendency to form neurotoxic intracellular neurofibrillary tangle-like inclusions in neurons. In terms of tissue distribution, produced by several tissues and cell types and mainly found associated with lipid particles in the plasma, the interstitial fluid and lymph. Mainly synthesized by liver hepatocytes. Significant quantities are also produced in brain, mainly by astrocytes and glial cells in the cerebral cortex, but also by neurons in frontal cortex and hippocampus. It is also expressed by cells of the peripheral nervous system. Also expressed by adrenal gland, testis, ovary, skin, kidney, spleen and adipose tissue and macrophages in various tissues.

The protein resides in the secreted. It localises to the extracellular space. It is found in the extracellular matrix. The protein localises to the extracellular vesicle. Its subcellular location is the endosome. The protein resides in the multivesicular body. Functionally, APOE is an apolipoprotein, a protein associating with lipid particles, that mainly functions in lipoprotein-mediated lipid transport between organs via the plasma and interstitial fluids. APOE is a core component of plasma lipoproteins and is involved in their production, conversion and clearance. Apolipoproteins are amphipathic molecules that interact both with lipids of the lipoprotein particle core and the aqueous environment of the plasma. As such, APOE associates with chylomicrons, chylomicron remnants, very low density lipoproteins (VLDL) and intermediate density lipoproteins (IDL) but shows a preferential binding to high-density lipoproteins (HDL). It also binds a wide range of cellular receptors including the LDL receptor/LDLR, the LDL receptor-related proteins LRP1, LRP2 and LRP8 and the very low-density lipoprotein receptor/VLDLR that mediate the cellular uptake of the APOE-containing lipoprotein particles. Finally, APOE also has a heparin-binding activity and binds heparan-sulfate proteoglycans on the surface of cells, a property that supports the capture and the receptor-mediated uptake of APOE-containing lipoproteins by cells. A main function of APOE is to mediate lipoprotein clearance through the uptake of chylomicrons, VLDLs, and HDLs by hepatocytes. APOE is also involved in the biosynthesis by the liver of VLDLs as well as their uptake by peripheral tissues ensuring the delivery of triglycerides and energy storage in muscle, heart and adipose tissues. By participating in the lipoprotein-mediated distribution of lipids among tissues, APOE plays a critical role in plasma and tissues lipid homeostasis. APOE is also involved in two steps of reverse cholesterol transport, the HDLs-mediated transport of cholesterol from peripheral tissues to the liver, and thereby plays an important role in cholesterol homeostasis. First, it is functionally associated with ABCA1 in the biogenesis of HDLs in tissues. Second, it is enriched in circulating HDLs and mediates their uptake by hepatocytes. APOE also plays an important role in lipid transport in the central nervous system, regulating neuron survival and sprouting. APOE is also involved in innate and adaptive immune responses, controlling for instance the survival of myeloid-derived suppressor cells. Binds to the immune cell receptor LILRB4. APOE may also play a role in transcription regulation through a receptor-dependent and cholesterol-independent mechanism, that activates MAP3K12 and a non-canonical MAPK signal transduction pathway that results in enhanced AP-1-mediated transcription of APP. In terms of biological role, (Microbial infection) Through its interaction with HCV envelope glycoprotein E2, participates in the attachment of HCV to HSPGs and other receptors (LDLr, VLDLr, and SR-B1) on the cell surface and to the assembly, maturation and infectivity of HCV viral particles. This interaction is probably promoted via the up-regulation of cellular autophagy by the virus. In Homo sapiens (Human), this protein is Apolipoprotein E.